The sequence spans 523 residues: MSIDISTLFYELVAAISLYLATYSFIRFLFKPSHHHHLPPGPTGWPIIGALPLLGTMPHVSLADMAVKYGPIMYLKLGSKGTVVASNPKAARAFLKTHDANFSNRPIDGGPTYLAYNAQDMVFAEYGPKWKLLRKLCSLHMLGPKALEDWAHVKVSEVGHMLKEMYEQSSKSVPVPVVVPEMLTYAMANMIGRIILSRRPFVITSKLDSSASASASVSEFQYMVMELMRMAGLFNIGDFIPYIAWMDLQGIQRDMKVIQKKFDVLLNKMIKEHTESAHDRKDNPDFLDILMAATQENTEGIQLNLVNVKALLLDLFTAGTDTSSSVIEWALAEMLNHRQILNRAHEEMDQVIGRNRRLEQSDIPNLPYFQAICKETFRKHPSTPLNLPRISTEACEVDGFHIPKNTRLIVNIWAIGRDPKVWENPLDFTPERFLSEKHAKIDPRGNHFELIPFGAGRRICAGARMGAASVEYILGTLVHSFDWKLPDGVVEVNMEESFGIALQKKVPLSAIVTPRLPPSSYTV.

Cys-460 is a binding site for heme.

It belongs to the cytochrome P450 family. The cofactor is heme.

The catalysed reaction is a 3',5'-unsubstituted flavanone + 2 reduced [NADPH--hemoprotein reductase] + 2 O2 = a 3',5'-dihydroxyflavanone + 2 oxidized [NADPH--hemoprotein reductase] + 2 H2O + 2 H(+). The protein operates within pigment biosynthesis; anthocyanin biosynthesis. Its function is as follows. Catalyzes the 3'5'-hydroxylation of naringenin and eriodictyol to form 5,7,3,'4',5'-pentahydroxyflavanone and 3',5'-hydroxylation of dihydrokaempferol and dihydroquercetin to form dihydromyricetin. The sequence is that of Flavonoid 3',5'-hydroxylase (CYP75A6) from Campanula medium (Canterbury bells).